Reading from the N-terminus, the 482-residue chain is Peptide chain release factor PrfB2, chloroplastic (482 aa).

The transit peptide at 1–21 (MLSLIIRRSRSRFIIHGIKIS) directs the protein to the chloroplast.

The protein belongs to the prokaryotic/mitochondrial release factor family.

Its subcellular location is the plastid. It is found in the chloroplast stroma. In terms of biological role, directs the termination of translation in response to the peptide chain termination codon UGA. Required for the proper translation, stability and normal processing of UGA-containing polycistronic transcripts in chloroplasts. This Arabidopsis thaliana (Mouse-ear cress) protein is Peptide chain release factor PrfB2, chloroplastic.